A 472-amino-acid chain; its full sequence is Poly(A) polymerase catalytic subunit (472 aa).

Residues Asp191 and Asp193 contribute to the active site.

Belongs to the poxviridae poly(A) polymerase catalytic subunit family. As to quaternary structure, heterodimer of a large (catalytic) subunit and a small (regulatory) subunit.

The catalysed reaction is RNA(n) + ATP = RNA(n)-3'-adenine ribonucleotide + diphosphate. Its function is as follows. Polymerase that creates the 3'-poly(A) tail of mRNA's. This chain is Poly(A) polymerase catalytic subunit (PAPL), found in Capra hircus (Goat).